Here is a 392-residue protein sequence, read N- to C-terminus: 1-deoxy-D-xylulose 5-phosphate reductoisomerase (392 aa).

Positions 10, 11, 12, 13, and 124 each coordinate NADPH. Lys-125 is a 1-deoxy-D-xylulose 5-phosphate binding site. Glu-126 is a binding site for NADPH. Asp-150 contributes to the Mn(2+) binding site. Ser-151, Glu-152, Ser-180, and His-203 together coordinate 1-deoxy-D-xylulose 5-phosphate. Glu-152 is a binding site for Mn(2+). Gly-209 is a binding site for NADPH. The 1-deoxy-D-xylulose 5-phosphate site is built by Ser-216, Asn-221, Lys-222, and Glu-225. Glu-225 is a Mn(2+) binding site.

This sequence belongs to the DXR family. It depends on Mg(2+) as a cofactor. Mn(2+) is required as a cofactor.

The catalysed reaction is 2-C-methyl-D-erythritol 4-phosphate + NADP(+) = 1-deoxy-D-xylulose 5-phosphate + NADPH + H(+). Its pathway is isoprenoid biosynthesis; isopentenyl diphosphate biosynthesis via DXP pathway; isopentenyl diphosphate from 1-deoxy-D-xylulose 5-phosphate: step 1/6. In terms of biological role, catalyzes the NADPH-dependent rearrangement and reduction of 1-deoxy-D-xylulose-5-phosphate (DXP) to 2-C-methyl-D-erythritol 4-phosphate (MEP). This is 1-deoxy-D-xylulose 5-phosphate reductoisomerase from Saccharophagus degradans (strain 2-40 / ATCC 43961 / DSM 17024).